The primary structure comprises 413 residues: Divalent metal cation transporter MntH (413 aa).

The Cytoplasmic portion of the chain corresponds to 1–19; sequence MTDNRVENSSGRAARKLRL. The chain crosses the membrane as a helical span at residues 20 to 39; the sequence is ALMGPAFIAAIGYIDPGNFA. Residues 40-51 are Periplasmic-facing; sequence TNIQAGASFGYQ. A helical transmembrane segment spans residues 52 to 71; that stretch reads LLWVVVWANLMAMLIQILSA. The Cytoplasmic segment spans residues 72–95; it reads KLGIATGKNLAEQIRDHYPRPVVW. Residues 96-118 traverse the membrane as a helical segment; sequence FYWVQAEIIAMATDLAEFIGAAI. The Periplasmic portion of the chain corresponds to 119–125; the sequence is GFKLILG. The helical transmembrane segment at 126 to 145 threads the bilayer; that stretch reads VSLLQGAVLTGIATFLILML. At 146 to 155 the chain is on the cytoplasmic side; the sequence is QRRGQKPLEK. A helical membrane pass occupies residues 156–175; it reads VIGGLLLFVAAAYIVELFFS. Topologically, residues 176–196 are periplasmic; that stretch reads QPDMAQLGKGMVIPALPNPEA. The chain crosses the membrane as a helical span at residues 197–220; it reads VFLAAGVLGATIMPHVIYLHSSLT. Residues 221–238 are Cytoplasmic-facing; the sequence is QHLHGGTRQQRYSATKWD. A helical transmembrane segment spans residues 239-258; sequence VAIAMTIAGFVNLAMMATAA. The Periplasmic portion of the chain corresponds to 259-276; the sequence is AAFHFSGHTGIADLDQAY. A helical transmembrane segment spans residues 277–297; sequence LTLEPLLSHAAATVFGLSLVA. The Cytoplasmic portion of the chain corresponds to 298-327; it reads AGLSSTVVGTLAGQVVMQGFVRFHIPLWVR. Residues 328 to 344 traverse the membrane as a helical segment; that stretch reads RTITMLPSFIVILMGLD. Residues 345–350 are Periplasmic-facing; sequence PTRILV. The chain crosses the membrane as a helical span at residues 351–370; the sequence is MSQVLLSFGIALALVPLLIF. The Cytoplasmic portion of the chain corresponds to 371-387; that stretch reads TSNATLMGELVNTRRVK. A helical membrane pass occupies residues 388–406; the sequence is QVGWIIVVLVVALNIWLLV. Residues 407 to 413 lie on the Periplasmic side of the membrane; the sequence is GTVMGLS.

This sequence belongs to the NRAMP family.

Its subcellular location is the cell inner membrane. H(+)-stimulated, divalent metal cation uptake system. This Salmonella paratyphi C (strain RKS4594) protein is Divalent metal cation transporter MntH.